We begin with the raw amino-acid sequence, 1509 residues long: Putative endo-alpha-N-acetylgalactosaminidase (1509 aa).

Residues 1–41 form the signal peptide; sequence MPFRGRRRQSALRGLSLAATFCLAAGSSGISGALFATPAQA. Residues Asp-288, Asn-290, Asp-292, Lys-294, and Asp-299 each contribute to the Ca(2+) site. The interval 313–585 is catalytic; it reads GGDDVKNRVV…NLPVKFLQQQ (273 aa). Asp-369 is a binding site for substrate. Asp-472 acts as the Nucleophile in catalysis. The active-site Proton donor/acceptor is Glu-498. Ca(2+)-binding residues include Asn-878, Glu-880, Asp-926, and Tyr-929. Disordered regions lie at residues 1176 to 1197 and 1403 to 1439; these read NGWGPVEKDQANGEQAQGDGPP and IKAANPNPGTGSNPGTGSNPGTDPGTGSAGGNSSGGG. The span at 1407–1428 shows a compositional bias: low complexity; sequence NPNPGTGSNPGTGSNPGTDPGT. Residues 1429 to 1439 show a composition bias toward gly residues; it reads GSAGGNSSGGG. Residues 1475–1479 carry the LPXTG sorting signal motif; it reads LAETG. At Thr-1478 the chain carries Pentaglycyl murein peptidoglycan amidated threonine. Residues 1479–1509 constitute a propeptide, removed by sortase; it reads GFSGLVLPLGIGLMLLLIGAAAIIVRRHRHS.

It belongs to the glycosyl hydrolase 101 family. A subfamily.

The protein resides in the secreted. Its subcellular location is the cell wall. The catalysed reaction is a 3-O-[beta-D-galactosyl-(1-&gt;3)-N-acetyl-alpha-D-galactosaminyl]-L-threonyl-[protein] + H2O = beta-D-galactosyl-(1-&gt;3)-N-acetyl-D-galactosamine + L-threonyl-[protein]. The enzyme catalyses a 3-O-[beta-D-galactosyl-(1-&gt;3)-N-acetyl-alpha-D-galactosaminyl]-L-seryl-[protein] + H2O = beta-D-galactosyl-(1-&gt;3)-N-acetyl-D-galactosamine + L-seryl-[protein]. Functionally, probably involved in the breakdown of mucin-type O-linked glycans. Specifically removes the T-antigen disaccharide (Gal-beta-1,3-GalNAc-alpha) from extracellular host glycoproteins. The protein is Putative endo-alpha-N-acetylgalactosaminidase of Renibacterium salmoninarum (strain ATCC 33209 / DSM 20767 / JCM 11484 / NBRC 15589 / NCIMB 2235).